Reading from the N-terminus, the 106-residue chain is ATP-dependent Clp protease adapter protein ClpS (106 aa).

Over residues 1 to 13 (MPRNTSHEHDHGL) the composition is skewed to basic and acidic residues. The tract at residues 1–20 (MPRNTSHEHDHGLMVEASKP) is disordered.

Belongs to the ClpS family. As to quaternary structure, binds to the N-terminal domain of the chaperone ClpA.

Involved in the modulation of the specificity of the ClpAP-mediated ATP-dependent protein degradation. The polypeptide is ATP-dependent Clp protease adapter protein ClpS (Xanthomonas axonopodis pv. citri (strain 306)).